Reading from the N-terminus, the 78-residue chain is Acyl carrier protein (78 aa).

The 76-residue stretch at 2-77 (SDIASRVKAI…QAISYIEEAK (76 aa)) folds into the Carrier domain. An O-(pantetheine 4'-phosphoryl)serine modification is found at Ser-37.

It belongs to the acyl carrier protein (ACP) family. Post-translationally, 4'-phosphopantetheine is transferred from CoA to a specific serine of apo-ACP by AcpS. This modification is essential for activity because fatty acids are bound in thioester linkage to the sulfhydryl of the prosthetic group.

It localises to the cytoplasm. Its pathway is lipid metabolism; fatty acid biosynthesis. Carrier of the growing fatty acid chain in fatty acid biosynthesis. This Flavobacterium johnsoniae (strain ATCC 17061 / DSM 2064 / JCM 8514 / BCRC 14874 / CCUG 350202 / NBRC 14942 / NCIMB 11054 / UW101) (Cytophaga johnsonae) protein is Acyl carrier protein.